The sequence spans 91 residues: Class I hydrophobin E (91 aa).

Residues 1–16 (MKFSIAAIALAAVAVA) form the signal peptide. Cystine bridges form between cysteine 30–cysteine 72, cysteine 42–cysteine 64, cysteine 43–cysteine 55, and cysteine 73–cysteine 89. Asparagine 83 carries N-linked (GlcNAc...) asparagine glycosylation.

It belongs to the fungal hydrophobin family.

The protein resides in the secreted. The protein localises to the cell wall. Its subcellular location is the vacuole. It localises to the cytoplasmic vesicle. In terms of biological role, aerial growth, conidiation, and dispersal of filamentous fungi in the environment rely upon a capability of their secreting small amphipathic proteins called hydrophobins (HPBs) with low sequence identity. Class I can self-assemble into an outermost layer of rodlet bundles on aerial cell surfaces, conferring cellular hydrophobicity that supports fungal growth, development and dispersal; whereas Class II form highly ordered films at water-air interfaces through intermolecular interactions but contribute nothing to the rodlet structure. Hyd1E contributes to certain cell wall-related features, such as hydrophobicity but is not involved in cell wall-related events during fungal proliferation in host hemocoel. Does not contribute to conidial hydrophobicity. The polypeptide is Class I hydrophobin E (Beauveria bassiana (strain ARSEF 2860) (White muscardine disease fungus)).